The primary structure comprises 266 residues: Cysteine-rich repeat secretory protein 41 (266 aa).

The signal sequence occupies residues 1 to 26 (MSSVFGSVHILAMIAIQLLLTHSVSS). 2 Gnk2-homologous domains span residues 33–136 (YLHH…SVAS) and 142–253 (YEND…LYPF).

The protein belongs to the cysteine-rich repeat secretory protein family.

It localises to the secreted. In Arabidopsis thaliana (Mouse-ear cress), this protein is Cysteine-rich repeat secretory protein 41 (CRRSP41).